The primary structure comprises 302 residues: Bifunctional protein FolD (302 aa).

NADP(+) is bound by residues 168 to 170 (GRS), threonine 197, and valine 238.

It belongs to the tetrahydrofolate dehydrogenase/cyclohydrolase family. In terms of assembly, homodimer.

It carries out the reaction (6R)-5,10-methylene-5,6,7,8-tetrahydrofolate + NADP(+) = (6R)-5,10-methenyltetrahydrofolate + NADPH. It catalyses the reaction (6R)-5,10-methenyltetrahydrofolate + H2O = (6R)-10-formyltetrahydrofolate + H(+). It participates in one-carbon metabolism; tetrahydrofolate interconversion. Functionally, catalyzes the oxidation of 5,10-methylenetetrahydrofolate to 5,10-methenyltetrahydrofolate and then the hydrolysis of 5,10-methenyltetrahydrofolate to 10-formyltetrahydrofolate. In Desulfatibacillum aliphaticivorans, this protein is Bifunctional protein FolD.